The primary structure comprises 556 residues: Polypeptide N-acetylgalactosaminyltransferase 13 (556 aa).

Residues 1-4 (MRRF) are Cytoplasmic-facing. The helical; Signal-anchor for type II membrane protein transmembrane segment at 5–27 (VYCKVVLATSLMWVLVDVFLLLY) threads the bilayer. At 28–556 (FSECNKCDDK…WLLRNMTLGT (529 aa)) the chain is on the lumenal side. Asn94 and Asn116 each carry an N-linked (GlcNAc...) asparagine glycan. Cystine bridges form between Cys105–Cys338, Cys329–Cys407, Cys441–Cys458, Cys481–Cys496, and Cys522–Cys539. A catalytic subdomain A region spans residues 114–224 (LPNTSVVIVF…LGWLEPLLAR (111 aa)). Positions 155 and 185 each coordinate substrate. The Mn(2+) site is built by Asp208 and His210. The catalytic subdomain B stretch occupies residues 284 to 346 (PVRTPTMAGG…TCSHVGHVFR (63 aa)). Residue Trp315 coordinates substrate. His343 is a Mn(2+) binding site. Residues Arg346 and Tyr351 each contribute to the substrate site. One can recognise a Ricin B-type lectin domain in the interval 428–550 (YSLGEIRNVE…GSRSQQWLLR (123 aa)). N-linked (GlcNAc...) asparagine glycosylation is present at Asn551.

It belongs to the glycosyltransferase 2 family. GalNAc-T subfamily. Mn(2+) serves as cofactor. As to expression, specifically expressed in neuronal cells. Expressed in fetal brain, whole adult brain, cerebral cortex and cerebellum. Not expressed in other tissues tested.

Its subcellular location is the golgi apparatus membrane. It carries out the reaction L-seryl-[protein] + UDP-N-acetyl-alpha-D-galactosamine = a 3-O-[N-acetyl-alpha-D-galactosaminyl]-L-seryl-[protein] + UDP + H(+). The catalysed reaction is L-threonyl-[protein] + UDP-N-acetyl-alpha-D-galactosamine = a 3-O-[N-acetyl-alpha-D-galactosaminyl]-L-threonyl-[protein] + UDP + H(+). It participates in protein modification; protein glycosylation. Its function is as follows. Catalyzes the initial reaction in O-linked oligosaccharide biosynthesis, the transfer of an N-acetyl-D-galactosamine (GalNAc) residue from UDP-GalNAc to a serine or threonine residue on the protein receptor. Generates GalNAc-O-Ser/Thr structure also known as Tn antigen, which itself is immunogenic but also serves as a precursor for the synthesis of different mucin-type O-glycan core structures. Contributes to the synthesis of O-linked glycans on mucins and proteoglycans of the central nervous system. May promote neurogenesis through glycosylation and stabilization of PDPN. Can glycosylate both unmodified peptides and glycopeptides that already contain an O-linked GalNAc sugar. Transfers GalNAc to Thr-/Ser-rich tandem repeats GTTPSPVPTTSTTSAP of MUC5AC, specifically on Thr-3 of non-glycosylated MUC5AC peptide, on Thr-12 and Thr-13 of preglycosylated MUC5AC at Thr-3 (MUC5AC-3), on Thr-3 of preglycosylated MUC5AC at Thr-13 (MUC5AC-13) and on Thr-12 of preglycosylated MUC5AC at Thr-3 and Thr-13 (MUC5AC-3,13). Transfers GalNAc to three consecutive serine/threonine residues on SDC3 forming a triplet-Tn epitope expressed in Purkinje cells of the developing brain. Functionally, can glycosylate both unmodified peptides and glycopeptides that already contain an O-linked GalNAc sugar. Transfers GalNAc to Thr-/Ser-rich tandem repeats GTTPSPVPTTSTTSAP of MUC5AC, specifically on Thr-3 of non-glycosylated MUC5AC peptide, on Thr-12 and Thr-13 of preglycosylated MUC5AC at Thr-3 (MUC5AC-3), on Thr-3 of preglycosylated MUC5AC at Thr-13 (MUC5AC-13) and on Thr-12 of preglycosylated MUC5AC at Thr-3 and Thr-13 (MUC5AC-3,13). This is Polypeptide N-acetylgalactosaminyltransferase 13 (GALNT13) from Homo sapiens (Human).